We begin with the raw amino-acid sequence, 89 residues long: Small ribosomal subunit protein bS20 (89 aa).

The protein belongs to the bacterial ribosomal protein bS20 family.

In terms of biological role, binds directly to 16S ribosomal RNA. This is Small ribosomal subunit protein bS20 from Helicobacter pylori (strain ATCC 700392 / 26695) (Campylobacter pylori).